Here is a 332-residue protein sequence, read N- to C-terminus: Galactinol synthase 7 (332 aa).

The active site involves K101. The Mn(2+) site is built by D117, D119, and H255.

Belongs to the glycosyltransferase 8 family. Galactosyltransferase subfamily. A divalent metal cation is required as a cofactor.

Its subcellular location is the cytoplasm. The enzyme catalyses myo-inositol + UDP-alpha-D-galactose = alpha-D-galactosyl-(1-&gt;3)-1D-myo-inositol + UDP + H(+). Galactinol synthase involved in the biosynthesis of raffinose family oligosaccharides (RFOs) that function as osmoprotectants. May promote plant stress tolerance. The polypeptide is Galactinol synthase 7 (GOLS7) (Arabidopsis thaliana (Mouse-ear cress)).